A 176-amino-acid chain; its full sequence is Peptide methionine sulfoxide reductase MsrA (176 aa).

The active site involves cysteine 10.

Belongs to the MsrA Met sulfoxide reductase family.

The enzyme catalyses L-methionyl-[protein] + [thioredoxin]-disulfide + H2O = L-methionyl-(S)-S-oxide-[protein] + [thioredoxin]-dithiol. The catalysed reaction is [thioredoxin]-disulfide + L-methionine + H2O = L-methionine (S)-S-oxide + [thioredoxin]-dithiol. Functionally, has an important function as a repair enzyme for proteins that have been inactivated by oxidation. Catalyzes the reversible oxidation-reduction of methionine sulfoxide in proteins to methionine. In Leptospira borgpetersenii serovar Hardjo-bovis (strain JB197), this protein is Peptide methionine sulfoxide reductase MsrA.